Consider the following 298-residue polypeptide: Glycine--tRNA ligase alpha subunit (298 aa).

The protein belongs to the class-II aminoacyl-tRNA synthetase family. As to quaternary structure, tetramer of two alpha and two beta subunits.

It localises to the cytoplasm. The catalysed reaction is tRNA(Gly) + glycine + ATP = glycyl-tRNA(Gly) + AMP + diphosphate. The chain is Glycine--tRNA ligase alpha subunit from Helicobacter acinonychis (strain Sheeba).